We begin with the raw amino-acid sequence, 618 residues long: ELMO domain-containing protein C (618 aa).

A coiled-coil region spans residues methionine 1–phenylalanine 72. Disordered stretches follow at residues asparagine 153–leucine 175 and threonine 245–valine 276. Composition is skewed to low complexity over residues asparagine 156–asparagine 171 and threonine 245–threonine 275. Positions aspartate 382–serine 545 constitute an ELMO domain. Low complexity-rich tracts occupy residues glutamine 574–proline 592 and threonine 602–asparagine 618. Residues glutamine 574–asparagine 618 are disordered.

In Dictyostelium discoideum (Social amoeba), this protein is ELMO domain-containing protein C (elmoC).